Consider the following 1244-residue polypeptide: Putative late blight resistance protein homolog R1A-4 (1244 aa).

Coiled-coil stretches lie at residues 411 to 434 (RYSD…ESLQ) and 526 to 548 (PRMN…QLLN). One can recognise an NB-ARC domain in the interval 527–755 (RMNEEIVGFK…ECWEQVANDL (229 aa)). 560–567 (GMPGLGKT) contributes to the ATP binding site. 5 LRR repeats span residues 978 to 1004 (LWNL…VWDM), 1079 to 1103 (PIRL…ISAP), 1127 to 1150 (LKNL…KVSN), 1153 to 1178 (FPQL…AFPN), and 1213 to 1237 (ESVV…NFKL).

Belongs to the disease resistance NB-LRR family.

It is found in the cytoplasm. The protein resides in the membrane. In terms of biological role, confers resistance to late blight (Phytophthora infestans) races carrying the avirulence gene Avr1. Resistance proteins guard the plant against pathogens that contain an appropriate avirulence protein via an indirect interaction with this avirulence protein. That triggers a defense system including the hypersensitive response, which restricts the pathogen growth. This is Putative late blight resistance protein homolog R1A-4 (R1A-4) from Solanum demissum (Wild potato).